A 33-amino-acid chain; its full sequence is Alpha-amanitin proprotein (33 aa).

Residues 1–10 constitute a propeptide that is removed on maturation; the sequence is MSDINATRLP. Ile11 carries the (3R,4R)-4,5-dihydroxyisoleucine; in form alpha-amanitin modification. Ile11 bears the (3R,4S)-4-hydroxyisoleucine; in form gamma-amanitin mark. A cross-link (cyclopeptide (Ile-Pro)) is located at residues 11–18; the sequence is IWGIGCNP. Residues 12–16 constitute a cross-link (2'-cysteinyl-6'-hydroxytryptophan sulfoxide (Trp-Cys)); that stretch reads WGIGC. Pro18 is subject to 4-hydroxyproline. A propeptide spanning residues 19 to 33 is cleaved from the precursor; it reads SVGDEVTALLTSGEA.

This sequence belongs to the MSDIN fungal toxin family. Post-translationally, processed by the macrocyclase-peptidase enzyme POPB to yield a toxic cyclic decapeptide. POPB first removes 10 residues from the N-terminus. Conformational trapping of the remaining peptide forces the enzyme to release this intermediate rather than proceed to macrocyclization. The enzyme rebinds the remaining peptide in a different conformation and catalyzes macrocyclization of the N-terminal 8 residues.

Its function is as follows. Major toxin belonging to the bicyclic octapeptides amatoxins that acts by binding non-competitively to RNA polymerase II and greatly slowing the elongation of transcripts from target promoters. The chain is Alpha-amanitin proprotein from Amanita fuliginea (East Asian brown death cap).